Reading from the N-terminus, the 180-residue chain is MKSRLEIKYKDQIVPELFKELNYKSIMQVPKIQKIVINMGIGDATTDPKKLDAAISELEKLSGQKPIVTKAKKSLAVFKLREGMAIGAKVTLRGKKMYDFLDKLINVALPRVRDFRGVSKTSFDGFGNFTTGIKEQIIFPEVDYDKVIRLRGMDITIVTSAKTNKEAFALLQKVGMPFEK.

The protein belongs to the universal ribosomal protein uL5 family. In terms of assembly, part of the 50S ribosomal subunit; part of the 5S rRNA/L5/L18/L25 subcomplex. Contacts the 5S rRNA and the P site tRNA. Forms a bridge to the 30S subunit in the 70S ribosome.

Its function is as follows. This is one of the proteins that bind and probably mediate the attachment of the 5S RNA into the large ribosomal subunit, where it forms part of the central protuberance. In the 70S ribosome it contacts protein S13 of the 30S subunit (bridge B1b), connecting the 2 subunits; this bridge is implicated in subunit movement. Contacts the P site tRNA; the 5S rRNA and some of its associated proteins might help stabilize positioning of ribosome-bound tRNAs. This is Large ribosomal subunit protein uL5 from Mycoplasma mycoides subsp. mycoides SC (strain CCUG 32753 / NCTC 10114 / PG1).